Consider the following 556-residue polypeptide: 2-succinyl-5-enolpyruvyl-6-hydroxy-3-cyclohexene-1-carboxylate synthase (556 aa).

This sequence belongs to the TPP enzyme family. MenD subfamily. Homodimer. Mg(2+) is required as a cofactor. It depends on Mn(2+) as a cofactor. Requires thiamine diphosphate as cofactor.

It catalyses the reaction isochorismate + 2-oxoglutarate + H(+) = 5-enolpyruvoyl-6-hydroxy-2-succinyl-cyclohex-3-ene-1-carboxylate + CO2. The protein operates within quinol/quinone metabolism; 1,4-dihydroxy-2-naphthoate biosynthesis; 1,4-dihydroxy-2-naphthoate from chorismate: step 2/7. It functions in the pathway quinol/quinone metabolism; menaquinone biosynthesis. Its function is as follows. Catalyzes the thiamine diphosphate-dependent decarboxylation of 2-oxoglutarate and the subsequent addition of the resulting succinic semialdehyde-thiamine pyrophosphate anion to isochorismate to yield 2-succinyl-5-enolpyruvyl-6-hydroxy-3-cyclohexene-1-carboxylate (SEPHCHC). In Escherichia coli (strain K12 / MC4100 / BW2952), this protein is 2-succinyl-5-enolpyruvyl-6-hydroxy-3-cyclohexene-1-carboxylate synthase.